Reading from the N-terminus, the 116-residue chain is ATP synthase lipid-binding protein, mitochondrial (116 aa).

A mitochondrion-targeting transit peptide spans 1–24; the sequence is MYCQRLALPLTRSLLASRAPLALR. The helical transmembrane segment at 57–77 threads the bilayer; sequence VGVAGSGAGIGNVFGALVIGY. Position 84 is an N6,N6,N6-trimethyllysine (K84). The chain crosses the membrane as a helical span at residues 92 to 112; that stretch reads ILGFALSEAMGLFCLTMGFMI.

It belongs to the ATPase C chain family. In terms of assembly, F-type ATPases have 2 components, CF(1) - the catalytic core - and CF(0) - the membrane proton channel. CF(1) has five subunits: alpha(3), beta(3), gamma(1), delta(1), epsilon(1). CF(0) has three main subunits: a, b and c. Post-translationally, trimethylated by ATPSCKMT at Lys-84. Methylation may be required for proper incorporation of the C subunit into the ATP synthase complex and mitochondrial respiration.

The protein resides in the mitochondrion membrane. Its function is as follows. Mitochondrial membrane ATP synthase (F(1)F(0) ATP synthase or Complex V) produces ATP from ADP in the presence of a proton gradient across the membrane which is generated by electron transport complexes of the respiratory chain. F-type ATPases consist of two structural domains, F(1) - containing the extramembraneous catalytic core and F(0) - containing the membrane proton channel, linked together by a central stalk and a peripheral stalk. During catalysis, ATP synthesis in the catalytic domain of F(1) is coupled via a rotary mechanism of the central stalk subunits to proton translocation. Part of the complex F(0) domain. A homomeric c-ring of probably 10 subunits is part of the complex rotary element. This chain is ATP synthase lipid-binding protein, mitochondrial, found in Caenorhabditis briggsae.